Reading from the N-terminus, the 197-residue chain is Pinin homolog 1 (197 aa).

A disordered region spans residues 30-73; that stretch reads LDGKVNNEDSHMEIDQPEGSMEEDDHRQVKEKNTSENSVEQKRG. Composition is skewed to basic and acidic residues over residues 34 to 43 and 53 to 71; these read VNNEDSHMEI and DDHR…VEQK.

This sequence belongs to the pinin family.

It localises to the nucleus. The protein resides in the cytoplasm. Transcriptional activator that may participate in the regulation of mRNA splicing. The chain is Pinin homolog 1 (pnn1) from Schizosaccharomyces pombe (strain 972 / ATCC 24843) (Fission yeast).